The primary structure comprises 666 residues: 7SK snRNA methylphosphate capping enzyme (666 aa).

N-acetylmethionine is present on Met1. Residues 1 to 10 (MIEMAAEKEP) show a composition bias toward basic and acidic residues. Residues 1–141 (MIEMAAEKEP…GSGGSFKHPA (141 aa)) are disordered. Over residues 50-61 (GPGPRAHSAGAA) the composition is skewed to low complexity. Ser57 is subject to Phosphoserine. Arg91 is modified (omega-N-methylarginine). Ser126, Ser150, and Ser154 each carry phosphoserine. Thr188 carries the phosphothreonine modification. 3 positions are modified to phosphoserine: Ser191, Ser192, and Ser229. A compositionally biased stretch (basic residues) spans 235–244 (RKRHRHRGPH). A disordered region spans residues 235–291 (RKRHRHRGPHHQQQQQASGGNDSNAAVLPTDPLTPSLHGEGATQQQQNRGQNRDAPQ). The segment covering 245-254 (HQQQQQASGG) has biased composition (low complexity). Position 268 is a phosphothreonine (Thr268). A phosphoserine mark is found at Ser307 and Ser321. Residues 309-337 (LPSALQGSSGSLSAPPAASVTSAPSTSSS) show a composition bias toward low complexity. Residues 309-383 (LPSALQGSSG…HHHPLPATGF (75 aa)) form a disordered region. Over residues 338–347 (SRHRKRRRTS) the composition is skewed to basic residues. Ser368 carries the post-translational modification Phosphoserine. S-adenosyl-L-methionine-binding positions include Tyr399, Arg410, 428-430 (GCN), 451-452 (DI), 536-537 (NY), and Phe558. The Bin3-type SAM domain occupies 408 to 663 (DVRLRVLKPE…PVYLFHKARS (256 aa)). Lys620 is covalently cross-linked (Glycyl lysine isopeptide (Lys-Gly) (interchain with G-Cter in SUMO2)).

It belongs to the methyltransferase superfamily. As to quaternary structure, core component of the 7SK RNP complex, at least composed of 7SK RNA, LARP7, MEPCE, HEXIM1 (or HEXIM2) and P-TEFb (composed of CDK9 and CCNT1/cyclin-T1). Interacts with METTL16. Interacts with RBM7; upon genotoxic stress this interaction is enhanced, triggering the release of inactive P-TEFb complex from the core, yielding to P-TEFb complex activation. Dephosphorylated at Ser-126 by the PNUTS-PP1 complex, promoting RNA polymerase II transcription pause-release.

It localises to the nucleus. The catalysed reaction is a 5'-end triphospho-guanosine-ribonucleotide-snRNA + S-adenosyl-L-methionine = a 5'-end methyltriphosphate-guanosine-ribonucleotide-snRNA + S-adenosyl-L-homocysteine. Its function is as follows. S-adenosyl-L-methionine-dependent methyltransferase that adds a methylphosphate cap at the 5'-end of 7SK snRNA (7SK RNA), leading to stabilize it. Also has a non-enzymatic function as part of the 7SK RNP complex: the 7SK RNP complex sequesters the positive transcription elongation factor b (P-TEFb) in a large inactive 7SK RNP complex preventing RNA polymerase II phosphorylation and subsequent transcriptional elongation. The 7SK RNP complex also promotes snRNA gene transcription by RNA polymerase II via interaction with the little elongation complex (LEC). In the 7SK RNP complex, MEPCE is required to stabilize 7SK RNA and facilitate the assembly of 7SK RNP complex. MEPCE has a non-enzymatic function in the 7SK RNP complex; it has a non-enzymatic function; interaction with LARP7 within the 7SK RNP complex occluding its catalytic center. Also required for stability of U6 snRNAs. This Mus musculus (Mouse) protein is 7SK snRNA methylphosphate capping enzyme.